We begin with the raw amino-acid sequence, 471 residues long: Ubiquitin carboxyl-terminal hydrolase 8 (471 aa).

Zn(2+) contacts are provided by C4, H6, C46, C49, C60, C63, C68, H73, H77, H83, C96, and C99. Residues 22–122 (KTCNAARYIL…ILAKYWDDVC (101 aa)) form a UBP-type; degenerate zinc finger. Residues 137-468 (SGLINMGSTC…QAYLLFYTIR (332 aa)) form the USP domain. Residue C146 is the Nucleophile of the active site. Residues H170, C174, C182, C185, H250, C271, C273, H276, C289, C292, C336, and C339 each coordinate Zn(2+). H427 (proton acceptor) is an active-site residue.

The protein belongs to the peptidase C19 family. UBP8 subfamily. In terms of assembly, component of the 1.8 MDa SAGA (Spt-Ada-Gcn5 acetyltransferase) complex, which is composed of 19 subunits TRA1, SPT7, TAF5, NGG1/ADA3, SGF73, SPT20/ADA5, SPT8, TAF12, TAF6, HFI1/ADA1, UBP8, GCN5, ADA2, SPT3, SGF29, TAF10, TAF9, SGF11 and SUS1. The SAGA complex is composed of 4 modules, namely the HAT (histone acetyltransferase) module (GCN5, ADA2, NGG1/ADA3 and SGF29), the DUB (deubiquitinating) module (UBP8, SGF11, SGF73 and SUS1), the core or TAF (TBP-associated factor) module (TAF5, TAF6, TAF9, TAF10 and TAF12), and the Tra1 or SPT (Suppressor of Ty) module (TRA1, HFI1/ADA1, SPT3, SPT7, SPT8 and SPT20/ADA5). The Tra1/SPT module binds activators, the core module recruits TBP (TATA-binding protein), the HAT module contains the histone H3 acetyltransferase GCN5, and the DUB module comprises the histone H2B deubiquitinase UBP8. Also identified in an altered form of SAGA, named SALSA (SAGA altered, Spt8 absent) or SLIK (SAGA-like) complex, which contains a C-terminal truncated form of SPT7 and is missing SPT8. However, it has been shown that the SAGA and SAGA-like SALSA/SLIK transcriptional coactivators are structurally and biochemically equivalent.

The protein resides in the nucleus. It carries out the reaction Thiol-dependent hydrolysis of ester, thioester, amide, peptide and isopeptide bonds formed by the C-terminal Gly of ubiquitin (a 76-residue protein attached to proteins as an intracellular targeting signal).. Functionally, histone deubiquitinating enzyme component of the transcription coactivator SAGA complex. SAGA acts as a general cofactor required for essentially all RNA polymerase II transcription. At the promoters, SAGA is required for transcription pre-initiation complex (PIC) recruitment. It influences RNA polymerase II transcriptional activity through different activities such as TBP interaction (via core/TAF module) and promoter selectivity, interaction with transcription activators (via Tra1/SPT module), and chromatin modification through histone acetylation (via HAT module) and deubiquitination (via DUB module). SAGA preferentially acetylates histones H3 (to form H3K9ac, H3K14ac, H3K18ac and H3K23ac) and H2B and deubiquitinates histone H2B. SAGA interacts with DNA via upstream activating sequences (UASs). Also identified in a modified version of SAGA named SALSA or SLIK. The cleavage of SPT7 and the absence of the SPT8 subunit in SLIK neither drive any major conformational differences in its structure compared with SAGA, nor significantly affect HAT, DUB, or DNA-binding activities. Within the DUB module, the correctly positioned zinc finger domains of SGF11 and SGF73 are both required to fully activate the ubiquitin hydrolase UBP8. The DUB module is also linked to the splicing efficiency of many transcripts. This Saccharomyces cerevisiae (strain ATCC 204508 / S288c) (Baker's yeast) protein is Ubiquitin carboxyl-terminal hydrolase 8 (UBP8).